The primary structure comprises 72 residues: ATP synthase subunit c (72 aa).

2 helical membrane-spanning segments follow: residues 1–21 (MSLGVLAAAIAVGLGALGAGI) and 48–68 (MFIGVALVEALPIIGVVFSFI).

Belongs to the ATPase C chain family. F-type ATPases have 2 components, F(1) - the catalytic core - and F(0) - the membrane proton channel. F(1) has five subunits: alpha(3), beta(3), gamma(1), delta(1), epsilon(1). F(0) has three main subunits: a(1), b(2) and c(10-14). The alpha and beta chains form an alternating ring which encloses part of the gamma chain. F(1) is attached to F(0) by a central stalk formed by the gamma and epsilon chains, while a peripheral stalk is formed by the delta and b chains.

The protein resides in the cell membrane. Functionally, f(1)F(0) ATP synthase produces ATP from ADP in the presence of a proton or sodium gradient. F-type ATPases consist of two structural domains, F(1) containing the extramembraneous catalytic core and F(0) containing the membrane proton channel, linked together by a central stalk and a peripheral stalk. During catalysis, ATP synthesis in the catalytic domain of F(1) is coupled via a rotary mechanism of the central stalk subunits to proton translocation. Key component of the F(0) channel; it plays a direct role in translocation across the membrane. A homomeric c-ring of between 10-14 subunits forms the central stalk rotor element with the F(1) delta and epsilon subunits. The protein is ATP synthase subunit c of Geobacillus kaustophilus (strain HTA426).